The primary structure comprises 177 residues: Coatomer subunit zeta-1 (177 aa).

This sequence belongs to the adaptor complexes small subunit family. As to quaternary structure, oligomeric complex that consists of at least the alpha, beta, beta', gamma, delta, epsilon and zeta subunits.

The protein resides in the cytoplasm. It localises to the golgi apparatus membrane. The protein localises to the cytoplasmic vesicle. Its subcellular location is the COPI-coated vesicle membrane. Functionally, the coatomer is a cytosolic protein complex that binds to dilysine motifs and reversibly associates with Golgi non-clathrin-coated vesicles, which further mediate biosynthetic protein transport from the ER, via the Golgi up to the trans Golgi network. Coatomer complex is required for budding from Golgi membranes, and is essential for the retrograde Golgi-to-ER transport of dilysine-tagged proteins. The zeta subunit may be involved in regulating the coat assembly and, hence, the rate of biosynthetic protein transport due to its association-dissociation properties with the coatomer complex. The chain is Coatomer subunit zeta-1 from Arabidopsis thaliana (Mouse-ear cress).